Consider the following 353-residue polypeptide: G-protein complex alpha subunit gpaA (353 aa).

Residues 1 to 25 (MGCGMSTEDKEGKARNEEIENQLKR) form a disordered region. The segment covering 7-25 (TEDKEGKARNEEIENQLKR) has biased composition (basic and acidic residues). A G-alpha domain is found at 32 to 353 (NEIKMLLLGA…QENLRLCGLI (322 aa)). Residues 35-48 (KMLLLGAGESGKST) are G1 motif. A divalent metal cation-binding residues include serine 47 and threonine 181. The interval 173–181 (DVLRSRVKT) is G2 motif. A G3 motif region spans residues 196–205 (YRMFDVGGQR). The G4 motif stretch occupies residues 265–272 (ILFLNKID). Residues 323–328 (TCATDT) are G5 motif.

It belongs to the G-alpha family. G(q) subfamily. As to quaternary structure, g proteins are composed of 3 units; alpha, beta and gamma. The alpha chain contains the guanine nucleotide binding site. Interacts with gprM.

In terms of biological role, G-protein complex alpha subunit that plays a role in conidiation and regulation of the biosynthesis of secondary metabolites such as dihydroxynaphthalene (DHN)-melanin, via interaction with the G protein-coupled receptor gprM. The protein is G-protein complex alpha subunit gpaA of Aspergillus fumigatus (strain CBS 144.89 / FGSC A1163 / CEA10) (Neosartorya fumigata).